Consider the following 327-residue polypeptide: Sideroflexin-2 (327 aa).

5 consecutive transmembrane segments (helical) span residues 99–119 (GMLI…VVLW), 143–163 (VTQL…AAIG), 175–195 (LFQR…NIPL), 228–248 (EVVV…PLIM), and 267–287 (FQTL…CALF).

It belongs to the sideroflexin family.

It localises to the mitochondrion membrane. It catalyses the reaction L-serine(in) = L-serine(out). Functionally, mitochondrial amino-acid transporter that mediates transport of serine into mitochondria. This Drosophila melanogaster (Fruit fly) protein is Sideroflexin-2.